A 203-amino-acid polypeptide reads, in one-letter code: Ras-related protein Rab-13 (203 aa).

Residues Ser17, Gly18, Gly20, Lys21, Thr22, Cys23, and Thr40 each coordinate GTP. Mg(2+) is bound at residue Thr22. Positions 31 to 45 match the Switch 1 motif; the sequence is DSFNNTYISTIGIDF. Residue Thr40 coordinates Mg(2+). Glycyl lysine isopeptide (Lys-Gly) (interchain with G-Cter in ubiquitin) cross-links involve residues Lys46 and Lys58. Mg(2+) is bound at residue Asp63. The Switch 2 signature appears at 63-80; that stretch reads DTAGQERFKTITTAYYRG. 6 residues coordinate GTP: Gly66, Asn121, Lys122, Asp124, Ala152, and Lys153. Positions 173 to 203 are disordered; that stretch reads SGGRRSGNSHKAPGTDLKPCDKKNTSKCSLG. Phosphoserine is present on Ser178. Cysteine methyl ester is present on Cys200. Cys200 is lipidated: S-geranylgeranyl cysteine. The propeptide at 201-203 is removed in mature form; it reads SLG.

This sequence belongs to the small GTPase superfamily. Rab family. As to quaternary structure, interacts (GTP-bound form) with MICALL2; competes with RAB8A and is involved in tight junctions assembly. Interacts (GTP-bound form) with MICALL1. Interacts (GTP-bound form) with MICAL1, MICAL3, MICALCL, EHBP1 and EHBP1L1; ternary complexes of RAB8A, RAB13 and either MICAL1 or EHBP1L1 are possible. Interacts with PRKACA; downstream effector of RAB13 involved in tight junction assembly. Interacts with GRB2; may recruit RAB13 to the leading edge of migrating endothelial cells where it can activate RHOA. Interacts (isoprenylated form) with PDE6D; dissociates RAB13 from membranes. Interacts with BICDL2/BICDR2. Interacts with LEPROT and LEPROTL1. The cofactor is Mg(2+). Ubiquitinated via 'Lys-11'-linked ubiquitination on Lys-46 and Lys-58; impairing the recruitment of guanosine diphosphate (GDP) dissociation inhibitor 1/GDI1.

Its subcellular location is the cell membrane. The protein resides in the cytoplasmic vesicle membrane. The protein localises to the cell junction. It localises to the tight junction. It is found in the golgi apparatus. Its subcellular location is the trans-Golgi network membrane. The protein resides in the recycling endosome membrane. The protein localises to the cell projection. It localises to the lamellipodium. The enzyme catalyses GTP + H2O = GDP + phosphate + H(+). With respect to regulation, regulated by guanine nucleotide exchange factors (GEFs) including DENND1C, which promote the exchange of bound GDP for free GTP. Regulated by GTPase activating proteins (GAPs) which increase the GTP hydrolysis activity. Inhibited by GDP dissociation inhibitors (GDIs). Activated in response to insulin. The small GTPases Rab are key regulators of intracellular membrane trafficking, from the formation of transport vesicles to their fusion with membranes. Rabs cycle between an inactive GDP-bound form and an active GTP-bound form that is able to recruit to membranes different sets of downstream effectors directly responsible for vesicle formation, movement, tethering and fusion. RAB13 is involved in endocytic recycling and regulates the transport to the plasma membrane of transmembrane proteins like the tight junction protein OCLN/occludin. Thereby, it regulates the assembly and the activity of tight junctions. Moreover, it may also regulate tight junction assembly by activating the PKA signaling pathway and by reorganizing the actin cytoskeleton through the activation of the downstream effectors PRKACA and MICALL2 respectively. Through its role in tight junction assembly, may play a role in the establishment of Sertoli cell barrier. Plays also a role in angiogenesis through regulation of endothelial cells chemotaxis. Also involved in neurite outgrowth. Has also been proposed to play a role in post-Golgi membrane trafficking from the TGN to the recycling endosome. Finally, it has been involved in insulin-induced transport to the plasma membrane of the glucose transporter GLUT4 and therefore may play a role in glucose homeostasis. The chain is Ras-related protein Rab-13 (RAB13) from Canis lupus familiaris (Dog).